The primary structure comprises 216 residues: Protein-L-isoaspartate O-methyltransferase (216 aa).

Residue serine 66 is part of the active site.

The protein belongs to the methyltransferase superfamily. L-isoaspartyl/D-aspartyl protein methyltransferase family.

The protein localises to the cytoplasm. It catalyses the reaction [protein]-L-isoaspartate + S-adenosyl-L-methionine = [protein]-L-isoaspartate alpha-methyl ester + S-adenosyl-L-homocysteine. Functionally, catalyzes the methyl esterification of L-isoaspartyl residues in peptides and proteins that result from spontaneous decomposition of normal L-aspartyl and L-asparaginyl residues. It plays a role in the repair and/or degradation of damaged proteins. The polypeptide is Protein-L-isoaspartate O-methyltransferase (Dechloromonas aromatica (strain RCB)).